Consider the following 212-residue polypeptide: MKNLERLFAEKLLKIKAIKLQPANPFTWASGWKSPFYCDNRKTLSYPSLRSFVKFEITRLVLERFGQVDAIAGVATGAIPQGALVADALNLPFVYVRSTPKDHGLENLIEGELRPGMKVVVVEDLISTGGSSLKAVEAIRRDGCEVIGMVAAYTYGFPVAEQAFKDAKVPLVTLTNYEAVLDVALRTGYIEEEDIATLNEWRKDPAHWETGK.

Residues R97, K101, H103, and 123-131 (EDLISTGGS) contribute to the 5-phospho-alpha-D-ribose 1-diphosphate site. S127 provides a ligand contact to orotate.

Belongs to the purine/pyrimidine phosphoribosyltransferase family. PyrE subfamily. Homodimer. Mg(2+) is required as a cofactor.

It carries out the reaction orotidine 5'-phosphate + diphosphate = orotate + 5-phospho-alpha-D-ribose 1-diphosphate. It participates in pyrimidine metabolism; UMP biosynthesis via de novo pathway; UMP from orotate: step 1/2. In terms of biological role, catalyzes the transfer of a ribosyl phosphate group from 5-phosphoribose 1-diphosphate to orotate, leading to the formation of orotidine monophosphate (OMP). This Bacteroides fragilis (strain ATCC 25285 / DSM 2151 / CCUG 4856 / JCM 11019 / LMG 10263 / NCTC 9343 / Onslow / VPI 2553 / EN-2) protein is Orotate phosphoribosyltransferase.